The chain runs to 282 residues: MTLFEAIMLGIVQGLTEFLPISSTAHLKIVPALLGWSDPGAAFTAIIQIGTLAAVLMYFWRDIITIVSAVMKGILKGKPLESNEARMGWMIAAGTIPIVVFGLLFKDQIETTLRSLYWISGALIGLALLLSLAEWNIKKHLSGGRPLKTMEQIGWKEALLIGLAQSIALIPGSSRSGVTITGGLFLNLSRETAARFSFLLSLPAVFAAGIFQLYKTWDIITASPGNIMNLAAATFTSAVVGYLSIAFLLSYLKKHTTTIFIIYRLLAGILLLLLLSTGTLLP.

The next 7 membrane-spanning stretches (helical) occupy residues 40–60, 85–105, 115–135, 153–173, 193–213, 230–250, and 258–278; these read GAAF…MYFW, ARMG…GLLF, SLYW…LAEW, IGWK…IPGS, AARF…IFQL, LAAA…FLLS, and TIFI…LSTG.

It belongs to the UppP family.

The protein resides in the cell inner membrane. The catalysed reaction is di-trans,octa-cis-undecaprenyl diphosphate + H2O = di-trans,octa-cis-undecaprenyl phosphate + phosphate + H(+). In terms of biological role, catalyzes the dephosphorylation of undecaprenyl diphosphate (UPP). Confers resistance to bacitracin. This Chlorobium phaeovibrioides (strain DSM 265 / 1930) (Prosthecochloris vibrioformis (strain DSM 265)) protein is Undecaprenyl-diphosphatase.